Here is a 1585-residue protein sequence, read N- to C-terminus: Sterol 3-beta-glucosyltransferase (1585 aa).

Residues 1-18 (MSPPISPTPPPLQPPFPP) show a composition bias toward pro residues. 3 disordered regions span residues 1–154 (MSPP…CDFR), 177–225 (PWEE…PTHT), and 249–279 (YQYATPETSSRRTSAAGSESSSEGEVPLPKG). Polar residues-rich tracts occupy residues 65-77 (DQATNSSNDSLIP), 105-123 (DAQTVRFSSSSPASYSTHE), and 132-148 (PRTSSRAPNTASSQMAE). The span at 178–194 (WEEDDDSDDGEDDDEFI) shows a compositional bias: acidic residues. Residues 255–273 (ETSSRRTSAAGSESSSEGE) show a composition bias toward low complexity. A GRAM 1 domain is found at 387–555 (ERLMEVFGLE…EAIVDVEKSP (169 aa)). The PH domain occupies 438–530 (LLVKSGPLHK…WVKAIQKVMF (93 aa)). 2 disordered regions span residues 625 to 645 (TSHATIKRHGTDSSAEKLGMA) and 666 to 852 (DGEP…GSES). Residues 670–689 (LEEHSQGPHHNDEDASHLPH) show a composition bias toward basic and acidic residues. Composition is skewed to polar residues over residues 760–785 (TDSSTTVTESGPSLRSRTGRTKQASV), 806–817 (NKPSVVDSNSAE), and 827–840 (SWTSETSSGSQMVK). The 72-residue stretch at 862–933 (RKFRTFFALS…RDLYGLKAQK (72 aa)) folds into the GRAM 2 domain. UDP-alpha-D-glucose is bound by residues S1043, R1044, D1046, I1358, H1360, H1373, G1377, T1378, D1397, and Q1398. The interval 1499-1555 (NRVRSRSRSRSRSSQGRFSPRRHTVDDDGWSVVSGGSRSRSGSASAVTSPERRPLNI) is disordered. Residues 1529–1545 (SVVSGGSRSRSGSASAV) show a composition bias toward low complexity.

It belongs to the glycosyltransferase 28 family.

The protein resides in the cytoplasm. The protein localises to the membrane. The catalysed reaction is a sterol + UDP-alpha-D-glucose = a sterol 3-beta-D-glucoside + UDP + H(+). It carries out the reaction ergosterol + UDP-alpha-D-glucose = ergosteryl 3-beta-D-glucoside + UDP + H(+). In terms of biological role, sterol glycosyltransferase responsible for the glycosylation of ergosterol to form ergosterol-glucoside. The polypeptide is Sterol 3-beta-glucosyltransferase (Cryptococcus neoformans var. neoformans serotype D (strain JEC21 / ATCC MYA-565) (Filobasidiella neoformans)).